A 38-amino-acid chain; its full sequence is ADCVGDGQKCADWFGPYCCSGYYCSCRSMPYCRCRSDS.

Disulfide bonds link Cys-3–Cys-19, Cys-10–Cys-24, Cys-18–Cys-34, and Cys-26–Cys-32. The residue at position 38 (Ser-38) is a Serine amide.

Belongs to the neurotoxin 07 (Beta/delta-agtx) family. 02 (aga-3) subfamily. Expressed by the venom gland.

Its subcellular location is the secreted. In terms of biological role, insecticidal neurotoxin that induces irreversible neuromuscular blockade in house crickets (A.domesticus). Modifies presynaptic voltage-gated sodium channels (Nav), causing them to open at the normal resting potential of the nerve. This leads to spontaneous release of neurotransmitter and repetitive action potentials in motor neurons. The sequence is that of Mu-agatoxin-Hc1c from Hololena curta (Funnel-web spider).